Reading from the N-terminus, the 88-residue chain is Acyl carrier protein (88 aa).

Positions 4–79 constitute a Carrier domain; it reads DSVPAKVMEI…AAVDYIQNKM (76 aa). At S39 the chain carries O-(pantetheine 4'-phosphoryl)serine.

This sequence belongs to the acyl carrier protein (ACP) family. Post-translationally, 4'-phosphopantetheine is transferred from CoA to a specific serine of apo-ACP by AcpS. This modification is essential for activity because fatty acids are bound in thioester linkage to the sulfhydryl of the prosthetic group.

The protein localises to the cytoplasm. Its pathway is lipid metabolism; fatty acid biosynthesis. Its function is as follows. Carrier of the growing fatty acid chain in fatty acid biosynthesis. In Trichodesmium erythraeum (strain IMS101), this protein is Acyl carrier protein.